Reading from the N-terminus, the 633-residue chain is Chaperone protein DnaK (633 aa).

Thr-198 bears the Phosphothreonine; by autocatalysis mark.

Belongs to the heat shock protein 70 family.

Functionally, acts as a chaperone. The protein is Chaperone protein DnaK of Rhodopseudomonas palustris (strain BisA53).